A 449-amino-acid chain; its full sequence is CCAAT/enhancer-binding protein (449 aa).

Disordered regions lie at residues 211–233 (HATYNNSSDENSSVGSDSSTIKE), 276–302 (GNPLNGGNTTPSSNGSNGSTGSSNGSQ), and 334–386 (SKLH…KAKV). Composition is skewed to low complexity over residues 215–229 (NNSSDENSSVGSDSS), 280–301 (NGGNTTPSSNGSNGSTGSSNGS), and 339–349 (QQQHQQHQQQQ). A compositionally biased stretch (basic and acidic residues) spans 357–368 (KHVDKGTDEYRR). A bZIP domain is found at 363-426 (TDEYRRRRER…QLHKQIYMQL (64 aa)). Residues 367–396 (RRRRERNNIAVRKSREKAKVRSREVEERVK) form a basic motif region. The leucine-zipper stretch occupies residues 398 to 405 (LLKEKDAL).

Belongs to the bZIP family. C/EBP subfamily. As to quaternary structure, binds DNA as a dimer and can form stable heterodimers. Interacts with trbl. Ubiquitination/deubiquitination regulates border cell migration. Ubiquitination is stimulated by trbl, which leads to proteasomal degradation and inhibits border cell migration. Deubiquitination by Usp47, leads to its stabilization and promotes border cell migration.

It localises to the nucleus. Functionally, required for the expression of gene products mediating border cell migration. Among the DNA sequences that this protein binds with high affinity is a conserved site within the promoter of its gene. This is CCAAT/enhancer-binding protein (slbo) from Drosophila melanogaster (Fruit fly).